We begin with the raw amino-acid sequence, 313 residues long: L-lactate dehydrogenase 1 (313 aa).

Positions 15, 36, 41, and 66 each coordinate NAD(+). Residues Gln-83, Arg-89, and 121 to 124 (NPVD) contribute to the substrate site. NAD(+) contacts are provided by residues 119–121 (ASN) and Ser-144. 149 to 152 (DTAR) is a binding site for substrate. Beta-D-fructose 1,6-bisphosphate contacts are provided by Arg-154 and His-169. Residue His-176 is the Proton acceptor of the active site. Tyr-218 bears the Phosphotyrosine mark. Residue Thr-227 coordinates substrate.

Belongs to the LDH/MDH superfamily. LDH family. In terms of assembly, homotetramer.

The protein localises to the cytoplasm. The enzyme catalyses (S)-lactate + NAD(+) = pyruvate + NADH + H(+). Its pathway is fermentation; pyruvate fermentation to lactate; (S)-lactate from pyruvate: step 1/1. Its activity is regulated as follows. Allosterically activated by fructose 1,6-bisphosphate (FBP). In terms of biological role, catalyzes the conversion of lactate to pyruvate. This Listeria monocytogenes serotype 4b (strain F2365) protein is L-lactate dehydrogenase 1.